A 28-amino-acid polypeptide reads, in one-letter code: MNLNAYFEAYQAIFPFLLEAFLRKEQKV.

This is an uncharacterized protein from Saccharomyces cerevisiae (strain ATCC 204508 / S288c) (Baker's yeast).